Reading from the N-terminus, the 311-residue chain is Quinolinate synthase (311 aa).

The iminosuccinate site is built by histidine 25 and serine 42. Residue cysteine 87 participates in [4Fe-4S] cluster binding. Iminosuccinate is bound by residues 113–115 (YIN) and serine 130. Cysteine 175 contributes to the [4Fe-4S] cluster binding site. Residues 201-203 (HPE) and threonine 218 each bind iminosuccinate. Position 268 (cysteine 268) interacts with [4Fe-4S] cluster.

Belongs to the quinolinate synthase family. Type 2 subfamily. [4Fe-4S] cluster is required as a cofactor.

The protein localises to the cytoplasm. The catalysed reaction is iminosuccinate + dihydroxyacetone phosphate = quinolinate + phosphate + 2 H2O + H(+). Its pathway is cofactor biosynthesis; NAD(+) biosynthesis; quinolinate from iminoaspartate: step 1/1. Catalyzes the condensation of iminoaspartate with dihydroxyacetone phosphate to form quinolinate. This is Quinolinate synthase from Saccharolobus solfataricus (strain ATCC 35092 / DSM 1617 / JCM 11322 / P2) (Sulfolobus solfataricus).